The following is a 364-amino-acid chain: Aminomethyltransferase (364 aa).

This sequence belongs to the GcvT family. As to quaternary structure, the glycine cleavage system is composed of four proteins: P, T, L and H.

It catalyses the reaction N(6)-[(R)-S(8)-aminomethyldihydrolipoyl]-L-lysyl-[protein] + (6S)-5,6,7,8-tetrahydrofolate = N(6)-[(R)-dihydrolipoyl]-L-lysyl-[protein] + (6R)-5,10-methylene-5,6,7,8-tetrahydrofolate + NH4(+). Its function is as follows. The glycine cleavage system catalyzes the degradation of glycine. The polypeptide is Aminomethyltransferase (Geobacillus sp. (strain WCH70)).